We begin with the raw amino-acid sequence, 337 residues long: Glyceraldehyde-3-phosphate dehydrogenase, cytosolic (337 aa).

Residues 13 to 14, Asp35, and Arg82 contribute to the NAD(+) site; that span reads RI. D-glyceraldehyde 3-phosphate is bound by residues 153 to 155, Thr184, 213 to 214, and Arg236; these read SCT and TG. Catalysis depends on Cys154, which acts as the Nucleophile. Asn318 contributes to the NAD(+) binding site.

The protein belongs to the glyceraldehyde-3-phosphate dehydrogenase family. In terms of assembly, homotetramer.

It localises to the cytoplasm. It carries out the reaction D-glyceraldehyde 3-phosphate + phosphate + NAD(+) = (2R)-3-phospho-glyceroyl phosphate + NADH + H(+). It participates in carbohydrate degradation; glycolysis; pyruvate from D-glyceraldehyde 3-phosphate: step 1/5. Key enzyme in glycolysis that catalyzes the first step of the pathway by converting D-glyceraldehyde 3-phosphate (G3P) into 3-phospho-D-glyceroyl phosphate. Essential for the maintenance of cellular ATP levels and carbohydrate metabolism. The polypeptide is Glyceraldehyde-3-phosphate dehydrogenase, cytosolic (GAPC) (Antirrhinum majus (Garden snapdragon)).